The sequence spans 313 residues: Solute carrier family 35 member E3 (313 aa).

A run of 10 helical transmembrane segments spans residues 14–34 (IIAG…INKW), 40–60 (GFPN…GLFI), 77–97 (ILLL…SLQS), 100–122 (IGTY…TMYY), 130–146 (IKLT…LNSY), 153–173 (LMGM…QVWV), 187–207 (LLYY…PFFE), 215–235 (IFGP…VIAF), 252–272 (TYNM…YVLF), and 275–295 (PLSL…LAYT).

The protein belongs to the TPT transporter family. SLC35E subfamily.

The protein localises to the membrane. Its function is as follows. Putative transporter. The chain is Solute carrier family 35 member E3 (slc35e3) from Danio rerio (Zebrafish).